We begin with the raw amino-acid sequence, 303 residues long: 4-diphosphocytidyl-2-C-methyl-D-erythritol kinase (303 aa).

Residue K21 is part of the active site. ATP is bound at residue 106-116; it reads PVAAGIGGGSA. D148 is a catalytic residue.

Belongs to the GHMP kinase family. IspE subfamily.

It catalyses the reaction 4-CDP-2-C-methyl-D-erythritol + ATP = 4-CDP-2-C-methyl-D-erythritol 2-phosphate + ADP + H(+). Its pathway is isoprenoid biosynthesis; isopentenyl diphosphate biosynthesis via DXP pathway; isopentenyl diphosphate from 1-deoxy-D-xylulose 5-phosphate: step 3/6. Functionally, catalyzes the phosphorylation of the position 2 hydroxy group of 4-diphosphocytidyl-2C-methyl-D-erythritol. This is 4-diphosphocytidyl-2-C-methyl-D-erythritol kinase from Nitrobacter hamburgensis (strain DSM 10229 / NCIMB 13809 / X14).